Reading from the N-terminus, the 237-residue chain is uncharacterized protein (237 aa).

21–28 contacts ATP; it reads GCDGSGKS.

To E.coli YghR and YghT.

This is an uncharacterized protein from Escherichia coli (strain K12).